A 199-amino-acid polypeptide reads, in one-letter code: UPF0637 protein YsbB (199 aa).

Belongs to the UPF0637 family.

This chain is UPF0637 protein YsbB (ysbB), found in Lactococcus lactis subsp. lactis (strain IL1403) (Streptococcus lactis).